The following is a 357-amino-acid chain: UDP-N-acetylglucosamine--N-acetylmuramyl-(pentapeptide) pyrophosphoryl-undecaprenol N-acetylglucosamine transferase (357 aa).

Residues 13–15 (SAG), Arg-166, Ser-196, and Gln-291 each bind UDP-N-acetyl-alpha-D-glucosamine.

Belongs to the glycosyltransferase 28 family. MurG subfamily.

Its subcellular location is the cell membrane. It catalyses the reaction di-trans,octa-cis-undecaprenyl diphospho-N-acetyl-alpha-D-muramoyl-L-alanyl-D-glutamyl-meso-2,6-diaminopimeloyl-D-alanyl-D-alanine + UDP-N-acetyl-alpha-D-glucosamine = di-trans,octa-cis-undecaprenyl diphospho-[N-acetyl-alpha-D-glucosaminyl-(1-&gt;4)]-N-acetyl-alpha-D-muramoyl-L-alanyl-D-glutamyl-meso-2,6-diaminopimeloyl-D-alanyl-D-alanine + UDP + H(+). Its pathway is cell wall biogenesis; peptidoglycan biosynthesis. Cell wall formation. Catalyzes the transfer of a GlcNAc subunit on undecaprenyl-pyrophosphoryl-MurNAc-pentapeptide (lipid intermediate I) to form undecaprenyl-pyrophosphoryl-MurNAc-(pentapeptide)GlcNAc (lipid intermediate II). This is UDP-N-acetylglucosamine--N-acetylmuramyl-(pentapeptide) pyrophosphoryl-undecaprenol N-acetylglucosamine transferase from Clostridium perfringens (strain ATCC 13124 / DSM 756 / JCM 1290 / NCIMB 6125 / NCTC 8237 / Type A).